The sequence spans 43 residues: Defensin (43 aa).

3 disulfides stabilise this stretch: Cys3–Cys34, Cys20–Cys39, and Cys24–Cys41.

It belongs to the invertebrate defensin family. Type 1 subfamily.

Its subcellular location is the secreted. Antibacterial peptide. Affects Gram-positive bacteria M.luteus, B.megaterium, A.viridans, S.aureus and S.saprophyticus. Moderate activity against P.acidilactici and B.subtilis QB935. Also affects Gram-negative bacterium, D22 form of E.coli. This Pyrrhocoris apterus (Sap sucking bug) protein is Defensin.